We begin with the raw amino-acid sequence, 140 residues long: MKESEGIDVKLMDIVRFDKNGLIPAITQDYETGKVLMLAYMNKESLEVTLKERKACYWSRSRQELWLKGATSGNFQEVMQISIDCDADAILLKVKQKGGACHVGYYSCFYRQVENDNSSLSICDKLVFDAEEVYGKSNKK.

Mg(2+) is bound at residue aspartate 84. Cysteine 85 contributes to the Zn(2+) binding site. The Mg(2+) site is built by aspartate 86 and aspartate 88. Residues cysteine 101 and cysteine 108 each contribute to the Zn(2+) site.

It belongs to the PRA-CH family. As to quaternary structure, homodimer. The cofactor is Mg(2+). Requires Zn(2+) as cofactor.

It is found in the cytoplasm. It carries out the reaction 1-(5-phospho-beta-D-ribosyl)-5'-AMP + H2O = 1-(5-phospho-beta-D-ribosyl)-5-[(5-phospho-beta-D-ribosylamino)methylideneamino]imidazole-4-carboxamide. The protein operates within amino-acid biosynthesis; L-histidine biosynthesis; L-histidine from 5-phospho-alpha-D-ribose 1-diphosphate: step 3/9. In terms of biological role, catalyzes the hydrolysis of the adenine ring of phosphoribosyl-AMP. This chain is Phosphoribosyl-AMP cyclohydrolase, found in Chloroherpeton thalassium (strain ATCC 35110 / GB-78).